Consider the following 219-residue polypeptide: MKKRRKICYCNTALLLMILLAGCTDSKDGEAQQPSNQASAVQTDEKHTEPEESTKIRKDEAEPITESEESATKAANDTSSAEEKSKEDNVLAAYSSEKIEYARVWLQLGPNQEIDELNVRHIAAGEPINPNDDTSASYPENVTQLAGSRLVDGSVTYHGNGDGTIHVYNVPLRWDSADDIEKGVMREVTESIIKNRKTVYVDTGDDEKIKRLIDIMMIH.

The N-terminal stretch at 1 to 22 (MKKRRKICYCNTALLLMILLAG) is a signal peptide. A lipid anchor (N-palmitoyl cysteine) is attached at cysteine 23. Cysteine 23 carries the S-diacylglycerol cysteine lipid modification. A disordered region spans residues 26-89 (SKDGEAQQPS…SAEEKSKEDN (64 aa)). Residues 32–42 (QQPSNQASAVQ) are compositionally biased toward polar residues. Positions 43 to 61 (TDEKHTEPEESTKIRKDEA) are enriched in basic and acidic residues.

It is found in the cell membrane. This is an uncharacterized protein from Bacillus subtilis (strain 168).